A 635-amino-acid chain; its full sequence is 1-deoxy-D-xylulose-5-phosphate synthase (635 aa).

Residues H72 and 113-115 contribute to the thiamine diphosphate site; that span reads GHA. Mg(2+) is bound at residue D144. Residues 145-146, N174, Y286, and E369 contribute to the thiamine diphosphate site; that span reads GA. A Mg(2+)-binding site is contributed by N174.

It belongs to the transketolase family. DXPS subfamily. Homodimer. It depends on Mg(2+) as a cofactor. Requires thiamine diphosphate as cofactor.

The enzyme catalyses D-glyceraldehyde 3-phosphate + pyruvate + H(+) = 1-deoxy-D-xylulose 5-phosphate + CO2. It participates in metabolic intermediate biosynthesis; 1-deoxy-D-xylulose 5-phosphate biosynthesis; 1-deoxy-D-xylulose 5-phosphate from D-glyceraldehyde 3-phosphate and pyruvate: step 1/1. Its function is as follows. Catalyzes the acyloin condensation reaction between C atoms 2 and 3 of pyruvate and glyceraldehyde 3-phosphate to yield 1-deoxy-D-xylulose-5-phosphate (DXP). In Acaryochloris marina (strain MBIC 11017), this protein is 1-deoxy-D-xylulose-5-phosphate synthase.